Consider the following 510-residue polypeptide: 2,3-bisphosphoglycerate-independent phosphoglycerate mutase (510 aa).

Mn(2+)-binding residues include aspartate 13 and serine 63. Serine 63 functions as the Phosphoserine intermediate in the catalytic mechanism. Substrate contacts are provided by residues histidine 124, 154 to 155 (RD), arginine 186, arginine 192, 262 to 265 (RADR), and lysine 334. Mn(2+) is bound by residues aspartate 401, histidine 405, aspartate 442, histidine 443, and histidine 461.

The protein belongs to the BPG-independent phosphoglycerate mutase family. As to quaternary structure, monomer. Mn(2+) serves as cofactor.

The enzyme catalyses (2R)-2-phosphoglycerate = (2R)-3-phosphoglycerate. It functions in the pathway carbohydrate degradation; glycolysis; pyruvate from D-glyceraldehyde 3-phosphate: step 3/5. Catalyzes the interconversion of 2-phosphoglycerate and 3-phosphoglycerate. This is 2,3-bisphosphoglycerate-independent phosphoglycerate mutase from Vibrio campbellii (strain ATCC BAA-1116).